Here is a 153-residue protein sequence, read N- to C-terminus: SsrA-binding protein (153 aa).

The protein belongs to the SmpB family.

Its subcellular location is the cytoplasm. In terms of biological role, required for rescue of stalled ribosomes mediated by trans-translation. Binds to transfer-messenger RNA (tmRNA), required for stable association of tmRNA with ribosomes. tmRNA and SmpB together mimic tRNA shape, replacing the anticodon stem-loop with SmpB. tmRNA is encoded by the ssrA gene; the 2 termini fold to resemble tRNA(Ala) and it encodes a 'tag peptide', a short internal open reading frame. During trans-translation Ala-aminoacylated tmRNA acts like a tRNA, entering the A-site of stalled ribosomes, displacing the stalled mRNA. The ribosome then switches to translate the ORF on the tmRNA; the nascent peptide is terminated with the 'tag peptide' encoded by the tmRNA and targeted for degradation. The ribosome is freed to recommence translation, which seems to be the essential function of trans-translation. In Sulfurovum sp. (strain NBC37-1), this protein is SsrA-binding protein.